A 508-amino-acid chain; its full sequence is Photosystem II CP47 reaction center protein (508 aa).

Transmembrane regions (helical) follow at residues 21–36 (SVHI…WAGS), 101–115 (IVFS…IWHW), 140–156 (GIHL…FGAF), 203–218 (IAAG…FHLS), 237–252 (VLSS…AFVV), and 457–472 (SFAL…HGAR).

It belongs to the PsbB/PsbC family. PsbB subfamily. In terms of assembly, PSII is composed of 1 copy each of membrane proteins PsbA, PsbB, PsbC, PsbD, PsbE, PsbF, PsbH, PsbI, PsbJ, PsbK, PsbL, PsbM, PsbT, PsbX, PsbY, PsbZ, Psb30/Ycf12, at least 3 peripheral proteins of the oxygen-evolving complex and a large number of cofactors. It forms dimeric complexes. The cofactor is Binds multiple chlorophylls. PSII binds additional chlorophylls, carotenoids and specific lipids..

Its subcellular location is the plastid. The protein resides in the chloroplast thylakoid membrane. One of the components of the core complex of photosystem II (PSII). It binds chlorophyll and helps catalyze the primary light-induced photochemical processes of PSII. PSII is a light-driven water:plastoquinone oxidoreductase, using light energy to abstract electrons from H(2)O, generating O(2) and a proton gradient subsequently used for ATP formation. This is Photosystem II CP47 reaction center protein from Dioscorea elephantipes (Elephant's foot yam).